Consider the following 471-residue polypeptide: Tryptophanase (471 aa).

Lys-270 bears the N6-(pyridoxal phosphate)lysine mark.

It belongs to the beta-eliminating lyase family. As to quaternary structure, homotetramer. Requires pyridoxal 5'-phosphate as cofactor.

The catalysed reaction is L-tryptophan + H2O = indole + pyruvate + NH4(+). It participates in amino-acid degradation; L-tryptophan degradation via pyruvate pathway; indole and pyruvate from L-tryptophan: step 1/1. In Histophilus somni (strain 2336) (Haemophilus somnus), this protein is Tryptophanase.